The sequence spans 598 residues: DNA polymerase alpha subunit B (598 aa).

Positions 112 to 140 are enriched in polar residues; sequence SYTTPSKGSQKRAISTPETPLTKRSVSTR. The disordered stretch occupies residues 112 to 167; the sequence is SYTTPSKGSQKRAISTPETPLTKRSVSTRSPHQLLSPSSFSPSATPSQKYNSRSNR. At S126 the chain carries Phosphoserine. A phosphothreonine mark is found at T127 and T130. Phosphoserine is present on residues S141, S147, S152, and S154. Positions 141 to 158 are enriched in low complexity; sequence SPHQLLSPSSFSPSATPS.

Belongs to the DNA polymerase alpha subunit B family. As to quaternary structure, component of the alpha DNA polymerase complex (also known as the alpha DNA polymerase-primase complex) consisting of four subunits: the catalytic subunit POLA1, the regulatory subunit POLA2, and primase complex subunits PRIM1 and PRIM2 respectively. Within the complex, POLA1 directly interacts with PRIM2/p58. Phosphorylated in a cell cycle-dependent manner, in G2/M phase.

It is found in the nucleus. In terms of biological role, accessory subunit of the DNA polymerase alpha complex (also known as the alpha DNA polymerase-primase complex) which plays an essential role in the initiation of DNA synthesis. During the S phase of the cell cycle, the DNA polymerase alpha complex (composed of a catalytic subunit POLA1, an accessory subunit POLA2 and two primase subunits, the catalytic subunit PRIM1 and the regulatory subunit PRIM2) is recruited to DNA at the replicative forks via direct interactions with MCM10 and WDHD1. The primase subunit of the polymerase alpha complex initiates DNA synthesis by oligomerising short RNA primers on both leading and lagging strands. These primers are initially extended by the polymerase alpha catalytic subunit and subsequently transferred to polymerase delta and polymerase epsilon for processive synthesis on the lagging and leading strand, respectively. This Homo sapiens (Human) protein is DNA polymerase alpha subunit B (POLA2).